The sequence spans 257 residues: 4-hydroxy-tetrahydrodipicolinate reductase (257 aa).

An NAD(+)-binding site is contributed by 7 to 12 (GCLGRM). Arg34 is a binding site for NADP(+). NAD(+) is bound by residues 96 to 98 (GTT) and 117 to 120 (SCNM). Residue His149 is the Proton donor/acceptor of the active site. His150 contacts (S)-2,3,4,5-tetrahydrodipicolinate. Lys153 acts as the Proton donor in catalysis. Residue 159-160 (GT) participates in (S)-2,3,4,5-tetrahydrodipicolinate binding.

Belongs to the DapB family.

The protein resides in the cytoplasm. It carries out the reaction (S)-2,3,4,5-tetrahydrodipicolinate + NAD(+) + H2O = (2S,4S)-4-hydroxy-2,3,4,5-tetrahydrodipicolinate + NADH + H(+). The enzyme catalyses (S)-2,3,4,5-tetrahydrodipicolinate + NADP(+) + H2O = (2S,4S)-4-hydroxy-2,3,4,5-tetrahydrodipicolinate + NADPH + H(+). It participates in amino-acid biosynthesis; L-lysine biosynthesis via DAP pathway; (S)-tetrahydrodipicolinate from L-aspartate: step 4/4. Catalyzes the conversion of 4-hydroxy-tetrahydrodipicolinate (HTPA) to tetrahydrodipicolinate. This is 4-hydroxy-tetrahydrodipicolinate reductase from Anaplasma marginale (strain St. Maries).